The primary structure comprises 457 residues: UDP-N-acetylmuramoylalanine--D-glutamate ligase (457 aa).

126–132 (GTAGKGS) serves as a coordination point for ATP.

It belongs to the MurCDEF family.

The protein localises to the cytoplasm. The enzyme catalyses UDP-N-acetyl-alpha-D-muramoyl-L-alanine + D-glutamate + ATP = UDP-N-acetyl-alpha-D-muramoyl-L-alanyl-D-glutamate + ADP + phosphate + H(+). It participates in cell wall biogenesis; peptidoglycan biosynthesis. Cell wall formation. Catalyzes the addition of glutamate to the nucleotide precursor UDP-N-acetylmuramoyl-L-alanine (UMA). This chain is UDP-N-acetylmuramoylalanine--D-glutamate ligase, found in Deinococcus radiodurans (strain ATCC 13939 / DSM 20539 / JCM 16871 / CCUG 27074 / LMG 4051 / NBRC 15346 / NCIMB 9279 / VKM B-1422 / R1).